A 129-amino-acid chain; its full sequence is MKSVQFCFLFCCWRAICCRSCELTNITITVEKEECSFCISINTTWCAGYCYTRDLVYKDPARPNIQKACTFKELVYETVKVPGCARHADSLYTYPVATECHCGKCDRDSTDCTVRGLGPSYCSFSDIRE.

The first 18 residues, 1–18 (MKSVQFCFLFCCWRAICC), serve as a signal peptide directing secretion. 6 cysteine pairs are disulfide-bonded: cysteine 21-cysteine 69, cysteine 35-cysteine 84, cysteine 38-cysteine 122, cysteine 46-cysteine 100, cysteine 50-cysteine 102, and cysteine 105-cysteine 112. Residues asparagine 25 and asparagine 42 are each glycosylated (N-linked (GlcNAc...) asparagine).

This sequence belongs to the glycoprotein hormones subunit beta family. As to quaternary structure, heterodimer. The active follitropin is a heterodimer composed of an alpha chain/CGA shared with other hormones and a unique beta chain/FSHB shown here.

Its subcellular location is the secreted. Together with the alpha chain CGA constitutes follitropin, the follicle-stimulating hormone, and provides its biological specificity to the hormone heterodimer. Binds FSHR, a G protein-coupled receptor, on target cells to activate downstream signaling pathways. Follitropin is involved in follicle development and spermatogenesis in reproductive organs. The protein is Follitropin subunit beta (FSHB) of Capra hircus (Goat).